The chain runs to 471 residues: Phosphatidylinositol 4-kinase type 2-alpha (471 aa).

2 disordered regions span residues 1 to 25 (MDETSPLVSPDRDQTDYSYQSQCSP) and 48 to 101 (PGSA…PDDP). Positions 90 to 101 (AERERNKFPDDP) are enriched in basic and acidic residues. Positions 117 to 445 (DILPERISQG…VQTPPVIVET (329 aa)) constitute a PI3K/PI4K catalytic domain. The tract at residues 123–129 (ISQGSSG) is G-loop. ATP-binding positions include 124-130 (SQGSSGS) and lysine 145. An important for substrate binding region spans residues 150–152 (EPY). The segment at 158-171 (KWTKWLQKLCCPCC) is important for interaction with membranes. 4 S-palmitoyl cysteine lipidation sites follow: cysteine 167, cysteine 168, cysteine 170, and cysteine 171. 254–257 (QLFV) provides a ligand contact to ATP. The interval 261–269 (KDADYWLRR) is important for interaction with membranes. Positions 298 to 306 (RNTDRGNDN) are catalytic loop. The activation loop stretch occupies residues 336–356 (AIDNGLAFPLKHPDSWRAYPF). An ATP-binding site is contributed by aspartate 338. The interval 351–360 (WRAYPFYWAW) is important for interaction with membranes.

Belongs to the PI3/PI4-kinase family. Type II PI4K subfamily.

The protein resides in the golgi apparatus. It is found in the trans-Golgi network membrane. Its subcellular location is the membrane raft. The protein localises to the endosome. It localises to the endosome membrane. The protein resides in the cytoplasmic vesicle. It is found in the cell projection. Its subcellular location is the dendrite. The protein localises to the presynaptic cell membrane. It localises to the synapse. The protein resides in the synaptosome. It is found in the mitochondrion. Its subcellular location is the membrane. The protein localises to the cell membrane. It localises to the perikaryon. The protein resides in the neuron projection. The enzyme catalyses a 1,2-diacyl-sn-glycero-3-phospho-(1D-myo-inositol) + ATP = a 1,2-diacyl-sn-glycero-3-phospho-(1D-myo-inositol 4-phosphate) + ADP + H(+). Functionally, membrane-bound phosphatidylinositol-4 kinase (PI4-kinase) that catalyzes the phosphorylation of phosphatidylinositol (PI) to phosphatidylinositol 4-phosphate (PI4P), a lipid that plays important roles in endocytosis, Golgi function, protein sorting and membrane trafficking. Besides, phosphorylation of phosphatidylinositol (PI) to phosphatidylinositol 4-phosphate (PI4P) is the first committed step in the generation of phosphatidylinositol 4,5-bisphosphate (PIP2), a precursor of the second messenger inositol 1,4,5-trisphosphate (InsP3). This chain is Phosphatidylinositol 4-kinase type 2-alpha (pi4k2a), found in Xenopus tropicalis (Western clawed frog).